The sequence spans 44 residues: Photosystem I reaction center subunit IX (44 aa).

The helical transmembrane segment at 7–27 threads the bilayer; sequence YLSVAPVLSTLSLGFFAGFLI.

The protein belongs to the PsaJ family.

The protein resides in the plastid membrane. In terms of biological role, may help in the organization of the PsaE and PsaF subunits. The protein is Photosystem I reaction center subunit IX of Cuscuta obtusiflora (Peruvian dodder).